A 489-amino-acid chain; its full sequence is MEHFQQVEPFDYVIFGATGDLTMRKLLPALYNRLRMGQIPDDACIIGAARTELDREAYVARARDALERFLPSDILGPGLVERFLARLDYVTLDSSREGPQWDALKSLLAKAQPDRVRVYYFATAPQLYGSICENLNRYELITPTSRVVLEKPIGTNMATATAINDGVGQYFPEKQIYRIDHYLGKETVQNVLALRFANPLMNAAWSGEHIESVQITAVETVGVEGRAAYYDTSGALRDMIQNHLLQVLCLVAMEAPDSLEADAVRNAKLAVLNALRPITDATAATETVRAQYTAGVVDGENVPGYLEELGKPSATETYAAIRAWVDTPRWKNVPFYIRTAKRSGKKVSEIVVTFRPAATTMFGATPASNRLVLRIQPNEGVDLRLNVKNPALDVFNLRTADLDTSIRMEGGLPFPDSYERLLLDAVRGDPVLFIRRDEVEAAWRWVEPILEAWKHDKAPMQTYSAGSYGPEQATQLLASHGDTWHEASE.

Arginine 50 and lysine 151 together coordinate NADP(+). The substrate site is built by histidine 181, lysine 185, glutamate 219, and aspartate 238. Catalysis depends on histidine 243, which acts as the Proton acceptor. Residues lysine 341 and lysine 346 each contribute to the substrate site.

The protein belongs to the glucose-6-phosphate dehydrogenase family. Homodimer.

It carries out the reaction D-glucose 6-phosphate + NADP(+) = 6-phospho-D-glucono-1,5-lactone + NADPH + H(+). It participates in carbohydrate degradation; pentose phosphate pathway; D-ribulose 5-phosphate from D-glucose 6-phosphate (oxidative stage): step 1/3. Functionally, catalyzes the oxidation of glucose 6-phosphate to 6-phosphogluconolactone. This chain is Glucose-6-phosphate 1-dehydrogenase, found in Gluconobacter oxydans (strain 621H) (Gluconobacter suboxydans).